Here is a 753-residue protein sequence, read N- to C-terminus: Polyribonucleotide nucleotidyltransferase (753 aa).

The Mg(2+) site is built by Asp-523 and Asp-529. Residues 589–648 form the KH domain; sequence PRIISVRIPVDKIGAVIGPKGAMINQIQDDTGADITIEDDGTVLIGATDGASAEAARSAV. The region spanning 660-732 is the S1 motif domain; it reads GERYLGTVVK…DRGKLSLSPV (73 aa). Positions 733 to 753 are disordered; the sequence is GAESDAVAETADAIESSQTEA.

The protein belongs to the polyribonucleotide nucleotidyltransferase family. Requires Mg(2+) as cofactor.

It localises to the cytoplasm. The catalysed reaction is RNA(n+1) + phosphate = RNA(n) + a ribonucleoside 5'-diphosphate. Involved in mRNA degradation. Catalyzes the phosphorolysis of single-stranded polyribonucleotides processively in the 3'- to 5'-direction. The protein is Polyribonucleotide nucleotidyltransferase of Micrococcus luteus (strain ATCC 4698 / DSM 20030 / JCM 1464 / CCM 169 / CCUG 5858 / IAM 1056 / NBRC 3333 / NCIMB 9278 / NCTC 2665 / VKM Ac-2230) (Micrococcus lysodeikticus).